The following is a 326-amino-acid chain: Aspartate carbamoyltransferase catalytic subunit (326 aa).

The carbamoyl phosphate site is built by Arg-65 and Thr-66. L-aspartate is bound at residue Lys-93. Carbamoyl phosphate is bound by residues Arg-115, His-143, and Gln-146. L-aspartate-binding residues include Arg-176 and Arg-230. Carbamoyl phosphate is bound by residues Gly-271 and Pro-272.

It belongs to the aspartate/ornithine carbamoyltransferase superfamily. ATCase family. Heterododecamer (2C3:3R2) of six catalytic PyrB chains organized as two trimers (C3), and six regulatory PyrI chains organized as three dimers (R2).

The enzyme catalyses carbamoyl phosphate + L-aspartate = N-carbamoyl-L-aspartate + phosphate + H(+). The protein operates within pyrimidine metabolism; UMP biosynthesis via de novo pathway; (S)-dihydroorotate from bicarbonate: step 2/3. Catalyzes the condensation of carbamoyl phosphate and aspartate to form carbamoyl aspartate and inorganic phosphate, the committed step in the de novo pyrimidine nucleotide biosynthesis pathway. This is Aspartate carbamoyltransferase catalytic subunit from Mesorhizobium japonicum (strain LMG 29417 / CECT 9101 / MAFF 303099) (Mesorhizobium loti (strain MAFF 303099)).